We begin with the raw amino-acid sequence, 843 residues long: Protein P (843 aa).

The terminal protein domain (TP) stretch occupies residues 1 to 177 (MPLSYPHFRK…FCGSPYSWEQ (177 aa)). Residues 178 to 346 (ELQHGSTSIN…YCLSHIINLL (169 aa)) form a spacer region. Disordered stretches follow at residues 180–221 (QHGS…FQQS) and 282–313 (REKTNPSLSTSKRHSSTGHAVELNPVPPGSVR). Positions 196–221 (SLCTQSSGILSRPSAGSSIQGKFQQS) are enriched in polar residues. A polymerase/reverse transcriptase domain (RT) region spans residues 347-690 (EDWGPCYEHG…YMHLYPVARQ (344 aa)). A Reverse transcriptase domain is found at 357-600 (QHHIRTPRTP…YTLNFMGYVI (244 aa)). The Mg(2+) site is built by D429, D551, and D552.

It belongs to the hepadnaviridae P protein family.

The enzyme catalyses DNA(n) + a 2'-deoxyribonucleoside 5'-triphosphate = DNA(n+1) + diphosphate. The catalysed reaction is Endonucleolytic cleavage to 5'-phosphomonoester.. Activated by host HSP70 and HSP40 in vitro to be able to bind the epsilon loop of the pgRNA. Because deletion of the RNase H region renders the protein partly chaperone-independent, the chaperones may be needed indirectly to relieve occlusion of the RNA-binding site by this domain. Inhibited by several reverse-transcriptase inhibitors: Lamivudine, Adefovir and Entecavir. Functionally, multifunctional enzyme that converts the viral RNA genome into dsDNA in viral cytoplasmic capsids. This enzyme displays a DNA polymerase activity that can copy either DNA or RNA templates, and a ribonuclease H (RNase H) activity that cleaves the RNA strand of RNA-DNA heteroduplexes in a partially processive 3'- to 5'-endonucleasic mode. Neo-synthesized pregenomic RNA (pgRNA) are encapsidated together with the P protein, and reverse-transcribed inside the nucleocapsid. Initiation of reverse-transcription occurs first by binding the epsilon loop on the pgRNA genome, and is initiated by protein priming, thereby the 5'-end of (-)DNA is covalently linked to P protein. Partial (+)DNA is synthesized from the (-)DNA template and generates the relaxed circular DNA (RC-DNA) genome. After budding and infection, the RC-DNA migrates in the nucleus, and is converted into a plasmid-like covalently closed circular DNA (cccDNA). The activity of P protein does not seem to be necessary for cccDNA generation, and is presumably released from (+)DNA by host nuclear DNA repair machinery. The sequence is that of Protein P from Homo sapiens (Human).